A 445-amino-acid chain; its full sequence is tRNA-2-methylthio-N(6)-dimethylallyladenosine synthase (445 aa).

The MTTase N-terminal domain maps to 2–119 (KKLYIRTFGC…LPQLIAERRH (118 aa)). Residues cysteine 11, cysteine 48, cysteine 82, cysteine 156, cysteine 160, and cysteine 163 each contribute to the [4Fe-4S] cluster site. Positions 142–378 (RVEGASAFVS…RIDQQAQAIS (237 aa)) constitute a Radical SAM core domain. The TRAM domain occupies 379 to 442 (QAMVGRVERA…PHSLRGEIVT (64 aa)).

This sequence belongs to the methylthiotransferase family. MiaB subfamily. In terms of assembly, monomer. The cofactor is [4Fe-4S] cluster.

It localises to the cytoplasm. It catalyses the reaction N(6)-dimethylallyladenosine(37) in tRNA + (sulfur carrier)-SH + AH2 + 2 S-adenosyl-L-methionine = 2-methylsulfanyl-N(6)-dimethylallyladenosine(37) in tRNA + (sulfur carrier)-H + 5'-deoxyadenosine + L-methionine + A + S-adenosyl-L-homocysteine + 2 H(+). Functionally, catalyzes the methylthiolation of N6-(dimethylallyl)adenosine (i(6)A), leading to the formation of 2-methylthio-N6-(dimethylallyl)adenosine (ms(2)i(6)A) at position 37 in tRNAs that read codons beginning with uridine. This chain is tRNA-2-methylthio-N(6)-dimethylallyladenosine synthase, found in Aromatoleum aromaticum (strain DSM 19018 / LMG 30748 / EbN1) (Azoarcus sp. (strain EbN1)).